The chain runs to 271 residues: NADPH-dependent 7-cyano-7-deazaguanine reductase (271 aa).

81–83 contacts substrate; the sequence is IES. Residue 83–84 participates in NADPH binding; it reads SK. The Thioimide intermediate role is filled by Cys177. Asp184 (proton donor) is an active-site residue. Substrate is bound at residue 216–217; that stretch reads HE. Position 245–246 (245–246) interacts with NADPH; the sequence is RG.

This sequence belongs to the GTP cyclohydrolase I family. QueF type 2 subfamily. As to quaternary structure, homodimer.

The protein resides in the cytoplasm. The enzyme catalyses 7-aminomethyl-7-carbaguanine + 2 NADP(+) = 7-cyano-7-deazaguanine + 2 NADPH + 3 H(+). It functions in the pathway tRNA modification; tRNA-queuosine biosynthesis. Its function is as follows. Catalyzes the NADPH-dependent reduction of 7-cyano-7-deazaguanine (preQ0) to 7-aminomethyl-7-deazaguanine (preQ1). The polypeptide is NADPH-dependent 7-cyano-7-deazaguanine reductase (Xanthomonas campestris pv. campestris (strain 8004)).